Here is a 328-residue protein sequence, read N- to C-terminus: Acetaldehyde dehydrogenase 3 (328 aa).

17-20 contributes to the NAD(+) binding site; sequence SGNI. The active-site Acyl-thioester intermediate is the cysteine 135. Residues 166-174 and asparagine 298 each bind NAD(+); that span reads SAGPGTRAN.

It belongs to the acetaldehyde dehydrogenase family.

It carries out the reaction acetaldehyde + NAD(+) + CoA = acetyl-CoA + NADH + H(+). This chain is Acetaldehyde dehydrogenase 3, found in Nocardia farcinica (strain IFM 10152).